The following is a 187-amino-acid chain: dCTP deaminase, dUMP-forming (187 aa).

DCTP contacts are provided by residues 101–106 (KSSLGR), aspartate 119, 127–129 (TLE), glutamine 148, tyrosine 162, lysine 170, and glutamine 174. The Proton donor/acceptor role is filled by glutamate 129.

The protein belongs to the dCTP deaminase family. As to quaternary structure, homotrimer.

The enzyme catalyses dCTP + 2 H2O = dUMP + NH4(+) + diphosphate. It participates in pyrimidine metabolism; dUMP biosynthesis; dUMP from dCTP: step 1/1. Bifunctional enzyme that catalyzes both the deamination of dCTP to dUTP and the hydrolysis of dUTP to dUMP without releasing the toxic dUTP intermediate. The polypeptide is dCTP deaminase, dUMP-forming (Corynebacterium diphtheriae (strain ATCC 700971 / NCTC 13129 / Biotype gravis)).